Reading from the N-terminus, the 135-residue chain is Dihydromethanopterin reductase (135 aa).

Residues Ala9, 16-21, 52-54, and 93-97 contribute to the NADP(+) site; these read LGLNGH, PKT, and GGIAV.

Homodimer.

The catalysed reaction is 5,6,7,8-tetrahydromethanopterin + NAD(+) = 7,8-dihydromethanopterin + NADH + H(+). It catalyses the reaction 5,6,7,8-tetrahydromethanopterin + NADP(+) = 7,8-dihydromethanopterin + NADPH + H(+). It functions in the pathway cofactor biosynthesis; 5,6,7,8-tetrahydromethanopterin biosynthesis. In terms of biological role, catalyzes the reduction of dihydromethanopterin (H(2)MPT) to tetrahydromethanopterin (H(4)MPT). Shows preference for NADPH rather than NADH as electron donor. Does not reduce dihydrofolate. The polypeptide is Dihydromethanopterin reductase (dmrA) (Methylorubrum extorquens (strain ATCC 14718 / DSM 1338 / JCM 2805 / NCIMB 9133 / AM1) (Methylobacterium extorquens)).